A 254-amino-acid chain; its full sequence is Dihydroorotate dehydrogenase B (NAD(+)), electron transfer subunit (254 aa).

Residues 1-99 (MLQTEMKVIQ…LGPLGKGFDL (99 aa)) enclose the FAD-binding FR-type domain. Residues 50–53 (RPIS), 67–69 (LYR), and 74–75 (GT) contribute to the FAD site. [2Fe-2S] cluster contacts are provided by cysteine 218, cysteine 223, cysteine 226, and cysteine 241.

The protein belongs to the PyrK family. As to quaternary structure, heterotetramer of 2 PyrK and 2 PyrD type B subunits. [2Fe-2S] cluster serves as cofactor. Requires FAD as cofactor.

It functions in the pathway pyrimidine metabolism; UMP biosynthesis via de novo pathway; orotate from (S)-dihydroorotate (NAD(+) route): step 1/1. Functionally, responsible for channeling the electrons from the oxidation of dihydroorotate from the FMN redox center in the PyrD type B subunit to the ultimate electron acceptor NAD(+). The chain is Dihydroorotate dehydrogenase B (NAD(+)), electron transfer subunit from Listeria innocua serovar 6a (strain ATCC BAA-680 / CLIP 11262).